A 379-amino-acid chain; its full sequence is Cytochrome b (379 aa).

4 consecutive transmembrane segments (helical) span residues 33-53 (FGSL…FLAM), 77-98 (WLIR…YIHI), 113-133 (WNIG…GYVL), and 178-198 (FFAF…VHLL). The heme b site is built by His-83 and His-97. Residues His-182 and His-196 each coordinate heme b. His-201 provides a ligand contact to a ubiquinone. 4 helical membrane-spanning segments follow: residues 226–246 (TKDF…VLYF), 288–308 (LGGV…PYIH), 320–340 (ISQF…WIGG), and 347–367 (FIII…IXMX).

It belongs to the cytochrome b family. As to quaternary structure, the cytochrome bc1 complex contains 11 subunits: 3 respiratory subunits (MT-CYB, CYC1 and UQCRFS1), 2 core proteins (UQCRC1 and UQCRC2) and 6 low-molecular weight proteins (UQCRH/QCR6, UQCRB/QCR7, UQCRQ/QCR8, UQCR10/QCR9, UQCR11/QCR10 and a cleavage product of UQCRFS1). This cytochrome bc1 complex then forms a dimer. Requires heme b as cofactor.

It localises to the mitochondrion inner membrane. Its function is as follows. Component of the ubiquinol-cytochrome c reductase complex (complex III or cytochrome b-c1 complex) that is part of the mitochondrial respiratory chain. The b-c1 complex mediates electron transfer from ubiquinol to cytochrome c. Contributes to the generation of a proton gradient across the mitochondrial membrane that is then used for ATP synthesis. The chain is Cytochrome b (MT-CYB) from Thomomys umbrinus (Southern pocket gopher).